Reading from the N-terminus, the 177-residue chain is Peptide deformylase (177 aa).

The Fe cation site is built by C98 and H140. Residue E141 is part of the active site. H144 contacts Fe cation.

Belongs to the polypeptide deformylase family. Requires Fe(2+) as cofactor.

The enzyme catalyses N-terminal N-formyl-L-methionyl-[peptide] + H2O = N-terminal L-methionyl-[peptide] + formate. Removes the formyl group from the N-terminal Met of newly synthesized proteins. Requires at least a dipeptide for an efficient rate of reaction. N-terminal L-methionine is a prerequisite for activity but the enzyme has broad specificity at other positions. This chain is Peptide deformylase, found in Zymomonas mobilis subsp. mobilis (strain ATCC 31821 / ZM4 / CP4).